We begin with the raw amino-acid sequence, 129 residues long: Histone H2A-III (129 aa).

The protein belongs to the histone H2A family. In terms of assembly, the nucleosome is a histone octamer containing two molecules each of H2A, H2B, H3 and H4 assembled in one H3-H4 heterotetramer and two H2A-H2B heterodimers. The octamer wraps approximately 147 bp of DNA.

It localises to the nucleus. The protein resides in the chromosome. Its function is as follows. Core component of nucleosome. Nucleosomes wrap and compact DNA into chromatin, limiting DNA accessibility to the cellular machineries which require DNA as a template. Histones thereby play a central role in transcription regulation, DNA repair, DNA replication and chromosomal stability. DNA accessibility is regulated via a complex set of post-translational modifications of histones, also called histone code, and nucleosome remodeling. In Volvox carteri (Green alga), this protein is Histone H2A-III.